Reading from the N-terminus, the 231-residue chain is Class II histocompatibility antigen, B-L beta chain (231 aa).

The interval 1–89 (FFQWSATVEC…IVAPLTLQRR (89 aa)) is beta-1. At 1–194 (FFQWSATVEC…PGDVSRSKLL (194 aa)) the chain is on the extracellular side. 2 disulfide bridges follow: C10-C74 and C111-C167. Residue N14 is glycosylated (N-linked (GlcNAc...) asparagine). The segment at 90–182 (EPKVRIFALQ…SLQQPITQRW (93 aa)) is beta-2. Positions 91–179 (PKVRIFALQS…EHTSLQQPIT (89 aa)) constitute an Ig-like C1-type domain. Positions 183–194 (EPPGDVSRSKLL) are connecting peptide. Residues 195 to 219 (MGVGGFVLGLVYLALGIFFFLCSKK) form a helical membrane-spanning segment. The Cytoplasmic segment spans residues 220–231 (GQPDPTSPGILN).

This sequence belongs to the MHC class II family.

The protein resides in the membrane. The protein is Class II histocompatibility antigen, B-L beta chain of Gallus gallus (Chicken).